The chain runs to 146 residues: Ribosome maturation factor RimP (146 aa).

It belongs to the RimP family.

The protein resides in the cytoplasm. Required for maturation of 30S ribosomal subunits. The polypeptide is Ribosome maturation factor RimP (Helicobacter pylori (strain HPAG1)).